Here is a 573-residue protein sequence, read N- to C-terminus: Phosphoenolpyruvate-protein phosphotransferase (573 aa).

His190 serves as the catalytic Tele-phosphohistidine intermediate. Substrate is bound by residues Arg297 and Arg333. Positions 432 and 456 each coordinate Mg(2+). Phosphoenolpyruvate is bound at residue 455–456 (ND). Position 466 (Arg466) interacts with substrate. The active-site Proton donor is Cys503.

This sequence belongs to the PEP-utilizing enzyme family. As to quaternary structure, homodimer. It depends on Mg(2+) as a cofactor.

It localises to the cytoplasm. The catalysed reaction is L-histidyl-[protein] + phosphoenolpyruvate = N(pros)-phospho-L-histidyl-[protein] + pyruvate. Its function is as follows. General (non sugar-specific) component of the phosphoenolpyruvate-dependent sugar phosphotransferase system (sugar PTS). This major carbohydrate active-transport system catalyzes the phosphorylation of incoming sugar substrates concomitantly with their translocation across the cell membrane. Enzyme I transfers the phosphoryl group from phosphoenolpyruvate (PEP) to the phosphoryl carrier protein (HPr). The chain is Phosphoenolpyruvate-protein phosphotransferase (ptsI) from Staphylococcus carnosus (strain TM300).